The primary structure comprises 107 residues: Putative pterin-4-alpha-carbinolamine dehydratase (107 aa).

This sequence belongs to the pterin-4-alpha-carbinolamine dehydratase family.

It carries out the reaction (4aS,6R)-4a-hydroxy-L-erythro-5,6,7,8-tetrahydrobiopterin = (6R)-L-erythro-6,7-dihydrobiopterin + H2O. This chain is Putative pterin-4-alpha-carbinolamine dehydratase, found in Paracoccus denitrificans (strain Pd 1222).